A 368-amino-acid chain; its full sequence is Phospho-N-acetylmuramoyl-pentapeptide-transferase (368 aa).

9 consecutive transmembrane segments (helical) span residues 23–43 (YITF…LVFG), 72–92 (IPTM…LLWA), 94–114 (IAEP…AVGF), 139–159 (VALG…SVLL), 170–190 (ITVD…TAVS), 201–221 (GLAA…AYLT), 238–258 (AGEV…FLWF), 265–286 (VFMG…ALLI), and 345–365 (KIVI…LLTL).

This sequence belongs to the glycosyltransferase 4 family. MraY subfamily. It depends on Mg(2+) as a cofactor.

It localises to the cell inner membrane. The enzyme catalyses UDP-N-acetyl-alpha-D-muramoyl-L-alanyl-gamma-D-glutamyl-meso-2,6-diaminopimeloyl-D-alanyl-D-alanine + di-trans,octa-cis-undecaprenyl phosphate = di-trans,octa-cis-undecaprenyl diphospho-N-acetyl-alpha-D-muramoyl-L-alanyl-D-glutamyl-meso-2,6-diaminopimeloyl-D-alanyl-D-alanine + UMP. The protein operates within cell wall biogenesis; peptidoglycan biosynthesis. Catalyzes the initial step of the lipid cycle reactions in the biosynthesis of the cell wall peptidoglycan: transfers peptidoglycan precursor phospho-MurNAc-pentapeptide from UDP-MurNAc-pentapeptide onto the lipid carrier undecaprenyl phosphate, yielding undecaprenyl-pyrophosphoryl-MurNAc-pentapeptide, known as lipid I. The polypeptide is Phospho-N-acetylmuramoyl-pentapeptide-transferase (Chloroherpeton thalassium (strain ATCC 35110 / GB-78)).